Consider the following 95-residue polypeptide: Aspartyl/glutamyl-tRNA(Asn/Gln) amidotransferase subunit C (95 aa).

The protein belongs to the GatC family. In terms of assembly, heterotrimer of A, B and C subunits.

The enzyme catalyses L-glutamyl-tRNA(Gln) + L-glutamine + ATP + H2O = L-glutaminyl-tRNA(Gln) + L-glutamate + ADP + phosphate + H(+). It carries out the reaction L-aspartyl-tRNA(Asn) + L-glutamine + ATP + H2O = L-asparaginyl-tRNA(Asn) + L-glutamate + ADP + phosphate + 2 H(+). In terms of biological role, allows the formation of correctly charged Asn-tRNA(Asn) or Gln-tRNA(Gln) through the transamidation of misacylated Asp-tRNA(Asn) or Glu-tRNA(Gln) in organisms which lack either or both of asparaginyl-tRNA or glutaminyl-tRNA synthetases. The reaction takes place in the presence of glutamine and ATP through an activated phospho-Asp-tRNA(Asn) or phospho-Glu-tRNA(Gln). This chain is Aspartyl/glutamyl-tRNA(Asn/Gln) amidotransferase subunit C, found in Bradyrhizobium diazoefficiens (strain JCM 10833 / BCRC 13528 / IAM 13628 / NBRC 14792 / USDA 110).